Here is a 138-residue protein sequence, read N- to C-terminus: Small ribosomal subunit protein uS11c (138 aa).

The tract at residues 1–22 (MTKPIPRIGSRRSGRIGSRKAG) is disordered. The span at 9-22 (GSRRSGRIGSRKAG) shows a compositional bias: basic residues.

Belongs to the universal ribosomal protein uS11 family. As to quaternary structure, part of the 30S ribosomal subunit.

It localises to the plastid. Its subcellular location is the chloroplast. This is Small ribosomal subunit protein uS11c from Piper cenocladum (Ant piper).